The sequence spans 802 residues: DNA mismatch repair protein MutS (802 aa).

Residue 617–624 (GPNMGGKS) participates in ATP binding.

This sequence belongs to the DNA mismatch repair MutS family.

Functionally, this protein is involved in the repair of mismatches in DNA. It is possible that it carries out the mismatch recognition step. This protein has a weak ATPase activity. The protein is DNA mismatch repair protein MutS of Buchnera aphidicola subsp. Acyrthosiphon pisum (strain Tuc7).